Here is a 121-residue protein sequence, read N- to C-terminus: Putative iron-sulfur cluster insertion protein ErpA (121 aa).

Iron-sulfur cluster-binding residues include Cys49, Cys113, and Cys115.

The protein belongs to the HesB/IscA family. As to quaternary structure, homodimer. Iron-sulfur cluster serves as cofactor.

Functionally, required for insertion of 4Fe-4S clusters. This chain is Putative iron-sulfur cluster insertion protein ErpA, found in Polaromonas sp. (strain JS666 / ATCC BAA-500).